Reading from the N-terminus, the 76-residue chain is Putative snRNP Sm-like protein (76 aa).

The region spanning 4 to 76 (RPLDVIHRSL…VLAISPVDIE (73 aa)) is the Sm domain.

This sequence belongs to the snRNP Sm proteins family.

In Thermococcus gammatolerans (strain DSM 15229 / JCM 11827 / EJ3), this protein is Putative snRNP Sm-like protein.